Consider the following 317-residue polypeptide: L-lactate dehydrogenase 1 (317 aa).

NAD(+) contacts are provided by residues V17, D38, K43, Y69, and 83–84; that span reads GA. Substrate-binding residues include Q86 and R92. Residues S105, 122–124, and S147 contribute to the NAD(+) site; that span reads ATN. 124-127 contacts substrate; the sequence is NPVD. 152 to 155 serves as a coordination point for substrate; that stretch reads DSAR. H179 acts as the Proton acceptor in catalysis. Position 223 is a phosphotyrosine (Y223). T232 is a substrate binding site.

It belongs to the LDH/MDH superfamily. LDH family. As to quaternary structure, homotetramer.

It localises to the cytoplasm. It carries out the reaction (S)-lactate + NAD(+) = pyruvate + NADH + H(+). It participates in fermentation; pyruvate fermentation to lactate; (S)-lactate from pyruvate: step 1/1. Catalyzes the conversion of lactate to pyruvate (Potential). Appears to be the primary factor that allows S.aureus growth during nitrosative stress in both aerobically and anaerobically cultured cells. This is L-lactate dehydrogenase 1 from Staphylococcus aureus (strain JH1).